A 340-amino-acid chain; its full sequence is Phosphoribosylformylglycinamidine cyclo-ligase (340 aa).

It belongs to the AIR synthase family.

It is found in the cytoplasm. The enzyme catalyses 2-formamido-N(1)-(5-O-phospho-beta-D-ribosyl)acetamidine + ATP = 5-amino-1-(5-phospho-beta-D-ribosyl)imidazole + ADP + phosphate + H(+). It functions in the pathway purine metabolism; IMP biosynthesis via de novo pathway; 5-amino-1-(5-phospho-D-ribosyl)imidazole from N(2)-formyl-N(1)-(5-phospho-D-ribosyl)glycinamide: step 2/2. The chain is Phosphoribosylformylglycinamidine cyclo-ligase from Streptococcus pyogenes serotype M6 (strain ATCC BAA-946 / MGAS10394).